A 128-amino-acid polypeptide reads, in one-letter code: 3-aminoacrylate deaminase RutC (128 aa).

This sequence belongs to the RutC family. As to quaternary structure, homotrimer.

It carries out the reaction (Z)-3-aminoacrylate + H2O + H(+) = 3-oxopropanoate + NH4(+). Functionally, involved in pyrimidine catabolism. Catalyzes the deamination of 3-aminoacrylate to malonic semialdehyde, a reaction that can also occur spontaneously. RutC may facilitate the reaction and modulate the metabolic fitness, rather than catalyzing essential functions. In Escherichia coli O157:H7, this protein is 3-aminoacrylate deaminase RutC.